Reading from the N-terminus, the 63-residue chain is Large ribosomal subunit protein bL32 (63 aa).

Belongs to the bacterial ribosomal protein bL32 family.

This chain is Large ribosomal subunit protein bL32, found in Acholeplasma laidlawii.